Here is a 265-residue protein sequence, read N- to C-terminus: Eukaryotic translation initiation factor 3 subunit J (265 aa).

Disordered stretches follow at residues 1–113 and 215–237; these read MPPS…DSDL and SNEK…AAKT. The segment covering 27 to 45 has biased composition (acidic residues); sequence DEEDGDVLDSWDAADDSEV. A coiled-coil region spans residues 43-95; sequence SEVEREKAAKAAEAKAKAEAEAAANKKSKAQRIAEHKTRRKAAEDEEDDESDE. The span at 46–62 shows a compositional bias: basic and acidic residues; it reads EREKAAKAAEAKAKAEA. The span at 86 to 97 shows a compositional bias: acidic residues; it reads EDEEDDESDEDE. 2 stretches are compositionally biased toward basic and acidic residues: residues 98 to 113 and 217 to 229; these read AEKR…DSDL and EKMK…DKGS.

This sequence belongs to the eIF-3 subunit J family. In terms of assembly, component of the eukaryotic translation initiation factor 3 (eIF-3) complex.

It is found in the cytoplasm. Component of the eukaryotic translation initiation factor 3 (eIF-3) complex, which is involved in protein synthesis of a specialized repertoire of mRNAs and, together with other initiation factors, stimulates binding of mRNA and methionyl-tRNAi to the 40S ribosome. The eIF-3 complex specifically targets and initiates translation of a subset of mRNAs involved in cell proliferation. The protein is Eukaryotic translation initiation factor 3 subunit J (hcr1) of Emericella nidulans (strain FGSC A4 / ATCC 38163 / CBS 112.46 / NRRL 194 / M139) (Aspergillus nidulans).